Reading from the N-terminus, the 405-residue chain is L-carnitine CoA-transferase (405 aa).

2 residues coordinate CoA: Lys-97 and Arg-104. Asp-169 serves as the catalytic Nucleophile.

The protein belongs to the CoA-transferase III family. CaiB subfamily. As to quaternary structure, homodimer.

The protein localises to the cytoplasm. The enzyme catalyses crotonobetainyl-CoA + (R)-carnitine = crotonobetaine + (R)-carnitinyl-CoA. The catalysed reaction is 4-(trimethylamino)butanoyl-CoA + (R)-carnitine = (R)-carnitinyl-CoA + 4-(trimethylamino)butanoate. The protein operates within amine and polyamine metabolism; carnitine metabolism. Catalyzes the reversible transfer of the CoA moiety from gamma-butyrobetainyl-CoA to L-carnitine to generate L-carnitinyl-CoA and gamma-butyrobetaine. Is also able to catalyze the reversible transfer of the CoA moiety from gamma-butyrobetainyl-CoA or L-carnitinyl-CoA to crotonobetaine to generate crotonobetainyl-CoA. In Escherichia coli O17:K52:H18 (strain UMN026 / ExPEC), this protein is L-carnitine CoA-transferase.